The following is a 154-amino-acid chain: Insulin-like growth factor 1 (154 aa).

The segment at 50–78 is b; the sequence is GPETLCGAELVDALQFVCGDRGFYFNKPT. Disulfide bonds link cysteine 55–cysteine 97, cysteine 67–cysteine 110, and cysteine 96–cysteine 101. Residues 79–90 are c; that stretch reads GYGSSSRRAPQT. The tract at residues 91–111 is a; it reads GIVDECCFRSCDLRRLEMYCA. The segment at 112–119 is d; that stretch reads PLKPAKSA. A propeptide spans 120-154 (e peptide); it reads RSVRAQRHTDMPKAQKEVHLKNTSRGSAGNKNYRM. Positions 121-154 are disordered; sequence SVRAQRHTDMPKAQKEVHLKNTSRGSAGNKNYRM. Over residues 126–139 the composition is skewed to basic and acidic residues; it reads RHTDMPKAQKEVHL. Residues 140-154 are compositionally biased toward polar residues; that stretch reads KNTSRGSAGNKNYRM.

This sequence belongs to the insulin family. As to quaternary structure, forms a ternary complex with IGFR1 and ITGAV:ITGB3. Forms a ternary complex with IGFR1 and ITGA6:ITGB4. Forms a ternary complex with IGFBP3 and ALS.

It localises to the secreted. Functionally, the insulin-like growth factors, isolated from plasma, are structurally and functionally related to insulin but have a much higher growth-promoting activity. May be a physiological regulator of [1-14C]-2-deoxy-D-glucose (2DG) transport and glycogen synthesis in osteoblasts. Stimulates glucose transport in bone-derived osteoblastic (PyMS) cells and is effective at much lower concentrations than insulin, not only regarding glycogen and DNA synthesis but also with regard to enhancing glucose uptake. May play a role in synapse maturation. Ca(2+)-dependent exocytosis of IGF1 is required for sensory perception of smell in the olfactory bulb. Acts as a ligand for IGF1R. Binds to the alpha subunit of IGF1R, leading to the activation of the intrinsic tyrosine kinase activity which autophosphorylates tyrosine residues in the beta subunit thus initiating a cascade of down-stream signaling events leading to activation of the PI3K-AKT/PKB and the Ras-MAPK pathways. Binds to integrins ITGAV:ITGB3 and ITGA6:ITGB4. Its binding to integrins and subsequent ternary complex formation with integrins and IGFR1 are essential for IGF1 signaling. Induces the phosphorylation and activation of IGFR1, MAPK3/ERK1, MAPK1/ERK2 and AKT1. As part of the MAPK/ERK signaling pathway, acts as a negative regulator of apoptosis in cardiomyocytes via promotion of STUB1/CHIP-mediated ubiquitination and degradation of ICER-type isoforms of CREM. This Bos taurus (Bovine) protein is Insulin-like growth factor 1.